The chain runs to 150 residues: Ribonuclease pancreatic delta-type (150 aa).

The N-terminal stretch at 1–25 (MGLEKSFILFSLLVLVLGWVQPSLG) is a signal peptide. Arg-35 is a binding site for substrate. His-37 serves as the catalytic Proton acceptor. Disulfide bonds link Cys-51–Cys-110, Cys-65–Cys-121, and Cys-83–Cys-136. Substrate is bound by residues 66 to 70 (KRVNT), Lys-91, and Arg-111. The Proton donor role is filled by His-145.

The protein belongs to the pancreatic ribonuclease family. Monomer.

The protein resides in the secreted. It catalyses the reaction an [RNA] containing cytidine + H2O = an [RNA]-3'-cytidine-3'-phosphate + a 5'-hydroxy-ribonucleotide-3'-[RNA].. It carries out the reaction an [RNA] containing uridine + H2O = an [RNA]-3'-uridine-3'-phosphate + a 5'-hydroxy-ribonucleotide-3'-[RNA].. In terms of biological role, endonuclease that catalyzes the cleavage of RNA on the 3' side of pyrimidine nucleotides. Acts on single-stranded and double-stranded RNA. This chain is Ribonuclease pancreatic delta-type, found in Rattus rattus (Black rat).